The following is a 132-amino-acid chain: Small ribosomal subunit protein uS9 (132 aa).

This sequence belongs to the universal ribosomal protein uS9 family.

This is Small ribosomal subunit protein uS9 (rpsI) from Mycoplasma pneumoniae (strain ATCC 29342 / M129 / Subtype 1) (Mycoplasmoides pneumoniae).